The primary structure comprises 158 residues: 6,7-dimethyl-8-ribityllumazine synthase (158 aa).

5-amino-6-(D-ribitylamino)uracil is bound by residues Phe24, Ala58–Glu60, and Ala82–Ile84. Gly87 to Thr88 provides a ligand contact to (2S)-2-hydroxy-3-oxobutyl phosphate. His90 (proton donor) is an active-site residue. Phe115 is a binding site for 5-amino-6-(D-ribitylamino)uracil. Arg129 contacts (2S)-2-hydroxy-3-oxobutyl phosphate.

The protein belongs to the DMRL synthase family. As to quaternary structure, forms an icosahedral capsid composed of 60 subunits, arranged as a dodecamer of pentamers.

It catalyses the reaction (2S)-2-hydroxy-3-oxobutyl phosphate + 5-amino-6-(D-ribitylamino)uracil = 6,7-dimethyl-8-(1-D-ribityl)lumazine + phosphate + 2 H2O + H(+). Its pathway is cofactor biosynthesis; riboflavin biosynthesis; riboflavin from 2-hydroxy-3-oxobutyl phosphate and 5-amino-6-(D-ribitylamino)uracil: step 1/2. Catalyzes the formation of 6,7-dimethyl-8-ribityllumazine by condensation of 5-amino-6-(D-ribitylamino)uracil with 3,4-dihydroxy-2-butanone 4-phosphate. This is the penultimate step in the biosynthesis of riboflavin. The chain is 6,7-dimethyl-8-ribityllumazine synthase from Ectopseudomonas mendocina (strain ymp) (Pseudomonas mendocina).